Here is a 105-residue protein sequence, read N- to C-terminus: MTKSELISKLAERFPQLLAKDAELVVKIILDAMAKSLARGERIEIRGFGSFDLNYRPSRVGRNPKSGEKVHVPEKYVPHFKAGKKMRELIDSSHKQHNLLDQATG.

Belongs to the bacterial histone-like protein family. Heterodimer of an alpha and a beta chain.

In terms of biological role, this protein is one of the two subunits of integration host factor, a specific DNA-binding protein that functions in genetic recombination as well as in transcriptional and translational control. This is Integration host factor subunit beta from Nitrosomonas eutropha (strain DSM 101675 / C91 / Nm57).